Reading from the N-terminus, the 185-residue chain is Histone H1-delta (185 aa).

Disordered regions lie at residues methionine 1–serine 37 and arginine 90–lysine 185. The 74-residue stretch at serine 32–glutamate 105 folds into the H15 domain. Residues threonine 109–lysine 185 show a composition bias toward basic residues.

Belongs to the histone H1/H5 family.

The protein localises to the nucleus. It localises to the chromosome. In terms of biological role, histones H1 are necessary for the condensation of nucleosome chains into higher-order structures. The protein is Histone H1-delta of Strongylocentrotus purpuratus (Purple sea urchin).